A 527-amino-acid polypeptide reads, in one-letter code: Bifunctional purine biosynthesis protein PurH (527 aa).

The MGS-like domain occupies 1-149; the sequence is MTADLLPVRR…KNFARVAVAT (149 aa).

The protein belongs to the PurH family.

The catalysed reaction is (6R)-10-formyltetrahydrofolate + 5-amino-1-(5-phospho-beta-D-ribosyl)imidazole-4-carboxamide = 5-formamido-1-(5-phospho-D-ribosyl)imidazole-4-carboxamide + (6S)-5,6,7,8-tetrahydrofolate. It catalyses the reaction IMP + H2O = 5-formamido-1-(5-phospho-D-ribosyl)imidazole-4-carboxamide. Its pathway is purine metabolism; IMP biosynthesis via de novo pathway; 5-formamido-1-(5-phospho-D-ribosyl)imidazole-4-carboxamide from 5-amino-1-(5-phospho-D-ribosyl)imidazole-4-carboxamide (10-formyl THF route): step 1/1. It participates in purine metabolism; IMP biosynthesis via de novo pathway; IMP from 5-formamido-1-(5-phospho-D-ribosyl)imidazole-4-carboxamide: step 1/1. This chain is Bifunctional purine biosynthesis protein PurH, found in Stenotrophomonas maltophilia (strain R551-3).